The sequence spans 474 residues: UDP glycosyltransferase 9 (474 aa).

UDP-alpha-D-glucose-binding positions include Ser296, 349 to 350 (WC), 367 to 375 (HCGWNSTLE), and 389 to 392 (WADQ).

Belongs to the UDP-glycosyltransferase family.

In Catharanthus roseus (Madagascar periwinkle), this protein is UDP glycosyltransferase 9.